We begin with the raw amino-acid sequence, 353 residues long: MTATLERRANATVWGRFCSWITSTENRLYIGWFGVLMIPTLLTATSVFIVAFIAAPPVDIDGIREPVSGSLMYGNNIISGAVIPTSNAIGLHFYPIWEAASLDEWLYNGGPYQLIVCHFFIGICSYMGREWELSFRLGMRPWIAVAYSAPVAAATAVFLIYPIGQGSFSDGMPLGISGTFNFMIVFQAEHNILMHPFHMLGVAGVFGGSLFSAMHGSLVTSSLIRETTENESANAGYKFGQEEETYNIVAAHGYFGRLIFQYASFNNSRSLHFFLAIWPVMGIWFTALGISTMAFNLNGFNFNQSVVDSNGRVINTWADIVNRANLGMEVMHERNAHNFPLDLASVEAPSINA.

Thr-2 carries the N-acetylthreonine modification. Thr-2 bears the Phosphothreonine mark. 3 helical membrane-spanning segments follow: residues 29 to 46 (YIGW…TATS), 118 to 133 (HFFI…EWEL), and 142 to 156 (WIAV…AATA). His-118 is a chlorophyll a binding site. Residue Tyr-126 coordinates pheophytin a. The [CaMn4O5] cluster site is built by Asp-170 and Glu-189. A helical transmembrane segment spans residues 197–218 (FHMLGVAGVFGGSLFSAMHGSL). Chlorophyll a is bound at residue His-198. A quinone-binding positions include His-215 and 264 to 265 (SF). A Fe cation-binding site is contributed by His-215. Residue His-272 coordinates Fe cation. The helical transmembrane segment at 274–288 (FLAIWPVMGIWFTAL) threads the bilayer. [CaMn4O5] cluster-binding residues include His-332, Glu-333, Asp-342, and Ala-344. The propeptide occupies 345 to 353 (SVEAPSINA).

The protein belongs to the reaction center PufL/M/PsbA/D family. In terms of assembly, PSII is composed of 1 copy each of membrane proteins PsbA, PsbB, PsbC, PsbD, PsbE, PsbF, PsbH, PsbI, PsbJ, PsbK, PsbL, PsbM, PsbT, PsbX, PsbY, PsbZ, Psb30/Ycf12, at least 3 peripheral proteins of the oxygen-evolving complex and a large number of cofactors. It forms dimeric complexes. The D1/D2 heterodimer binds P680, chlorophylls that are the primary electron donor of PSII, and subsequent electron acceptors. It shares a non-heme iron and each subunit binds pheophytin, quinone, additional chlorophylls, carotenoids and lipids. D1 provides most of the ligands for the Mn4-Ca-O5 cluster of the oxygen-evolving complex (OEC). There is also a Cl(-1) ion associated with D1 and D2, which is required for oxygen evolution. The PSII complex binds additional chlorophylls, carotenoids and specific lipids. is required as a cofactor. Tyr-161 forms a radical intermediate that is referred to as redox-active TyrZ, YZ or Y-Z. In terms of processing, C-terminally processed by CTPA; processing is essential to allow assembly of the oxygen-evolving complex and thus photosynthetic growth.

Its subcellular location is the plastid. The protein resides in the chloroplast thylakoid membrane. It carries out the reaction 2 a plastoquinone + 4 hnu + 2 H2O = 2 a plastoquinol + O2. In terms of biological role, photosystem II (PSII) is a light-driven water:plastoquinone oxidoreductase that uses light energy to abstract electrons from H(2)O, generating O(2) and a proton gradient subsequently used for ATP formation. It consists of a core antenna complex that captures photons, and an electron transfer chain that converts photonic excitation into a charge separation. The D1/D2 (PsbA/PsbD) reaction center heterodimer binds P680, the primary electron donor of PSII as well as several subsequent electron acceptors. The polypeptide is Photosystem II protein D1 (Ostreococcus tauri).